The following is a 78-amino-acid chain: Small ribosomal subunit protein bS20 (78 aa).

A disordered region spans residues 1–34 (MANIKSNLKRNKQNRARHTVVHSQTSAVKTQIKK). The segment covering 7–20 (NLKRNKQNRARHTV) has biased composition (basic residues). Positions 21-34 (VHSQTSAVKTQIKK) are enriched in polar residues.

The protein belongs to the bacterial ribosomal protein bS20 family.

Functionally, binds directly to 16S ribosomal RNA. The polypeptide is Small ribosomal subunit protein bS20 (Malacoplasma penetrans (strain HF-2) (Mycoplasma penetrans)).